The sequence spans 417 residues: Serine hydroxymethyltransferase (417 aa).

(6S)-5,6,7,8-tetrahydrofolate-binding positions include leucine 121 and 125–127 (GHL). Position 229 is an N6-(pyridoxal phosphate)lysine (lysine 229). (6S)-5,6,7,8-tetrahydrofolate is bound at residue 355–357 (SPF).

It belongs to the SHMT family. Homodimer. Pyridoxal 5'-phosphate is required as a cofactor.

Its subcellular location is the cytoplasm. The enzyme catalyses (6R)-5,10-methylene-5,6,7,8-tetrahydrofolate + glycine + H2O = (6S)-5,6,7,8-tetrahydrofolate + L-serine. It functions in the pathway one-carbon metabolism; tetrahydrofolate interconversion. Its pathway is amino-acid biosynthesis; glycine biosynthesis; glycine from L-serine: step 1/1. Its function is as follows. Catalyzes the reversible interconversion of serine and glycine with tetrahydrofolate (THF) serving as the one-carbon carrier. This reaction serves as the major source of one-carbon groups required for the biosynthesis of purines, thymidylate, methionine, and other important biomolecules. Also exhibits THF-independent aldolase activity toward beta-hydroxyamino acids, producing glycine and aldehydes, via a retro-aldol mechanism. This Klebsiella pneumoniae subsp. pneumoniae (strain ATCC 700721 / MGH 78578) protein is Serine hydroxymethyltransferase.